The sequence spans 306 residues: 5'-hydroxyaverantin dehydrogenase (306 aa).

The NADP(+) site is built by Ser-25, Ile-27, Gln-48, Lys-52, and Asp-73. Ser-173 acts as the Proton donor in catalysis. Residues Tyr-187, Lys-191, Val-220, and Thr-222 each coordinate NADP(+). Tyr-187 acts as the Proton acceptor in catalysis. Residue Lys-191 is the Lowers pKa of active site Tyr of the active site.

It belongs to the short-chain dehydrogenases/reductases (SDR) family. In terms of assembly, homodimer.

Its subcellular location is the cytoplasm. The protein resides in the cytosol. It carries out the reaction (1'S,5'S)-5'-hydroxyaverantin + NAD(+) = (S)-5'-oxoaverantin + NADH + H(+). The enzyme catalyses (1'S,5'R)-5'-hydroxyaverantin + NAD(+) = (S)-5'-oxoaverantin + NADH + 2 H(+). Its pathway is mycotoxin biosynthesis. 5'-hydroxyaverantin dehydrogenase; part of the fragmented gene cluster that mediates the biosynthesis of dothistromin (DOTH), a polyketide toxin very similar in structure to the aflatoxin precursor, versicolorin B. The first step of the pathway is the conversion of acetate to norsolorinic acid (NOR) and requires the fatty acid synthase subunits hexA and hexB, as well as the polyketide synthase pksA. PksA combines a hexanoyl starter unit and 7 malonyl-CoA extender units to synthesize the precursor NOR. The hexanoyl starter unit is provided to the acyl-carrier protein (ACP) domain by the fungal fatty acid synthase hexA/hexB. The second step is the conversion of NOR to averantin (AVN) and requires the norsolorinic acid ketoreductase nor1, which catalyzes the dehydration of norsolorinic acid to form (1'S)-averantin. The cytochrome P450 monooxygenase avnA then catalyzes the hydroxylation of AVN to 5'hydroxyaverantin (HAVN). The next step is performed by adhA that transforms HAVN to averufin (AVF). Averufin might then be converted to hydroxyversicolorone by cypX and avfA. Hydroxyversicolorone is further converted versiconal hemiacetal acetate (VHA) by moxY. VHA is then the substrate for the versiconal hemiacetal acetate esterase est1 to yield versiconal (VAL). Versicolorin B synthase vbsA then converts VAL to versicolorin B (VERB) by closing the bisfuran ring. Then, the activity of the versicolorin B desaturase verB leads to versicolorin A (VERA). DotB, a predicted chloroperoxidase, may perform epoxidation of the A-ring of VERA. Alternatively, a cytochrome P450, such as cypX or avnA could catalyze this step. It is also possible that another, uncharacterized, cytochrome P450 enzyme is responsible for this step. Opening of the epoxide could potentially be achieved by the epoxide hydrolase epoA. However, epoA seems not to be required for DOTH biosynthesis, but other epoxide hydrolases may have the ability to complement this hydrolysis. Alternatively, opening of the epoxide ring could be achieved non-enzymatically. The next step is the deoxygenation of ring A to yield the 5,8-dihydroxyanthraquinone which is most likely catalyzed by the NADPH dehydrogenase encoded by ver1. The last stages of DOTH biosynthesis are proposed to involve hydroxylation of the bisfuran. OrdB and norB might have oxidative roles here. An alternative possibility is that cytochrome P450 monoogenases such as avnA and cypX might perform these steps in addition to previously proposed steps. In Dothistroma septosporum (strain NZE10 / CBS 128990) (Red band needle blight fungus), this protein is 5'-hydroxyaverantin dehydrogenase.